Reading from the N-terminus, the 198-residue chain is dCTP deaminase, dUMP-forming (198 aa).

Residues 115–120, Asp133, 141–143, Gln162, Tyr175, and Lys184 each bind dCTP; these read KSSIAR and TLE. The active-site Proton donor/acceptor is the Glu143.

This sequence belongs to the dCTP deaminase family. Homotrimer.

The enzyme catalyses dCTP + 2 H2O = dUMP + NH4(+) + diphosphate. It participates in pyrimidine metabolism; dUMP biosynthesis; dUMP from dCTP: step 1/1. Bifunctional enzyme that catalyzes both the deamination of dCTP to dUTP and the hydrolysis of dUTP to dUMP without releasing the toxic dUTP intermediate. In Nanoarchaeum equitans (strain Kin4-M), this protein is dCTP deaminase, dUMP-forming.